Reading from the N-terminus, the 314-residue chain is Deoxymugineic acid synthase 1 (314 aa).

Residues 1–21 form a disordered region; it reads MGAGDRTVAGMPRIGMGTAVQ. An NADP(+)-binding site is contributed by Asp44. The Proton donor role is filled by Tyr49. His112 lines the substrate pocket. NADP(+) contacts are provided by residues 158 to 159, Gln180, 258 to 266, and 273 to 281; these read AN, FDEARMREN, and ELTEEERRR.

Belongs to the aldo/keto reductase family.

It catalyses the reaction 2'-deoxymugineate + NAD(+) = 3''-deamino-3''-oxonicotianamine + NADH + H(+). It carries out the reaction 2'-deoxymugineate + NADP(+) = 3''-deamino-3''-oxonicotianamine + NADPH + H(+). It functions in the pathway siderophore biosynthesis. Functionally, catalyzes the reduction of a 3''-keto intermediate during the biosynthesis of 2'-deoxymugineic acid (DMA) from L-Met. Involved in the formation of phytosiderophores (MAs) belonging to the mugineic acid family and required to acquire iron. The polypeptide is Deoxymugineic acid synthase 1 (Hordeum vulgare (Barley)).